We begin with the raw amino-acid sequence, 240 residues long: 4-hydroxy-tetrahydrodipicolinate reductase (240 aa).

NAD(+) is bound by residues 79–81 (ATT) and 103–106 (SANM). Catalysis depends on His-135, which acts as the Proton donor/acceptor. Residue His-136 participates in (S)-2,3,4,5-tetrahydrodipicolinate binding. The Proton donor role is filled by Lys-139. (S)-2,3,4,5-tetrahydrodipicolinate is bound at residue 145–146 (GT).

Belongs to the DapB family.

The protein resides in the cytoplasm. The enzyme catalyses (S)-2,3,4,5-tetrahydrodipicolinate + NAD(+) + H2O = (2S,4S)-4-hydroxy-2,3,4,5-tetrahydrodipicolinate + NADH + H(+). It carries out the reaction (S)-2,3,4,5-tetrahydrodipicolinate + NADP(+) + H2O = (2S,4S)-4-hydroxy-2,3,4,5-tetrahydrodipicolinate + NADPH + H(+). Its pathway is amino-acid biosynthesis; L-lysine biosynthesis via DAP pathway; (S)-tetrahydrodipicolinate from L-aspartate: step 4/4. Catalyzes the conversion of 4-hydroxy-tetrahydrodipicolinate (HTPA) to tetrahydrodipicolinate. In Staphylococcus saprophyticus subsp. saprophyticus (strain ATCC 15305 / DSM 20229 / NCIMB 8711 / NCTC 7292 / S-41), this protein is 4-hydroxy-tetrahydrodipicolinate reductase.